The following is a 493-amino-acid chain: NAD(P)H-quinone oxidoreductase chain 4, chloroplastic (493 aa).

A run of 14 helical transmembrane segments spans residues 4-24, 34-54, 87-107, 111-131, 134-154, 167-187, 212-232, 242-262, 276-296, 313-333, 334-354, 385-405, 417-437, and 462-482; these read FPWLSIIILFPLFAAFFIPLL, WYTLGICLLDFLVMSYIFGYY, MGLILLTGLVTTLAVLAAWPI, PKLFYFLMLVMYSGQIGLFTS, LFLFFLMWELELIPIYLLISL, FIFYTAIGSLFLFIATFTVCF, ILYLGFGFAYAVKLPIIPFHT, HYSTCMLLAGILLKMGGYGWI, FAPWLVILGTVQIIYAASVCL, MGFVLIGICSFTNIGLSGAIC, QMISHGLIGASLFFLAGTTYD, SLALPTMSGFVAEMMIFLGII, FIILFQALGVILTPIYLLSML, and VFIIVSLFIPVIIIGLYPNIL.

The protein belongs to the complex I subunit 4 family.

It localises to the plastid. It is found in the chloroplast thylakoid membrane. The enzyme catalyses a plastoquinone + NADH + (n+1) H(+)(in) = a plastoquinol + NAD(+) + n H(+)(out). It catalyses the reaction a plastoquinone + NADPH + (n+1) H(+)(in) = a plastoquinol + NADP(+) + n H(+)(out). This chain is NAD(P)H-quinone oxidoreductase chain 4, chloroplastic, found in Chara vulgaris (Common stonewort).